The sequence spans 144 residues: Probable nucleoside diphosphate kinase 5 (144 aa).

Positions 3, 51, 79, 85, 99, and 109 each coordinate ATP. Residue H112 is the Pros-phosphohistidine intermediate of the active site.

The protein belongs to the NDK family.

The catalysed reaction is a 2'-deoxyribonucleoside 5'-diphosphate + ATP = a 2'-deoxyribonucleoside 5'-triphosphate + ADP. It carries out the reaction a ribonucleoside 5'-diphosphate + ATP = a ribonucleoside 5'-triphosphate + ADP. Its function is as follows. Involved in the synthesis of nucleoside triphosphates other than ATP. The ATP gamma phosphate is transferred to the NDP beta phosphate via a ping-pong mechanism, using a phosphorylated active-site intermediate. The polypeptide is Probable nucleoside diphosphate kinase 5 (Arabidopsis thaliana (Mouse-ear cress)).